The primary structure comprises 231 residues: Cytochrome c oxidase subunit 2 (231 aa).

Topologically, residues 1–14 (MAHPSQLGLQDAAS) are mitochondrial intermembrane. The chain crosses the membrane as a helical span at residues 15 to 45 (PVMEELLHFHDHALMIVFLISTLVFYIILAM). Residues 46 to 59 (MTTKMTDKYILDAQ) are Mitochondrial matrix-facing. A helical membrane pass occupies residues 60–87 (EIEIVWTLLPAIVLILVALPSLRILYLI). The Mitochondrial intermembrane segment spans residues 88 to 231 (DEVENPHLTI…WSSSMLEEAX (144 aa)). Cu cation is bound by residues His-161, Cys-196, Glu-198, Cys-200, His-204, and Met-207. Mg(2+) is bound at residue Glu-198.

The protein belongs to the cytochrome c oxidase subunit 2 family. In terms of assembly, component of the cytochrome c oxidase (complex IV, CIV), a multisubunit enzyme composed of 14 subunits. The complex is composed of a catalytic core of 3 subunits MT-CO1, MT-CO2 and MT-CO3, encoded in the mitochondrial DNA, and 11 supernumerary subunits COX4I, COX5A, COX5B, COX6A, COX6B, COX6C, COX7A, COX7B, COX7C, COX8 and NDUFA4, which are encoded in the nuclear genome. The complex exists as a monomer or a dimer and forms supercomplexes (SCs) in the inner mitochondrial membrane with NADH-ubiquinone oxidoreductase (complex I, CI) and ubiquinol-cytochrome c oxidoreductase (cytochrome b-c1 complex, complex III, CIII), resulting in different assemblies (supercomplex SCI(1)III(2)IV(1) and megacomplex MCI(2)III(2)IV(2)). Found in a complex with TMEM177, COA6, COX18, COX20, SCO1 and SCO2. Interacts with TMEM177 in a COX20-dependent manner. Interacts with COX20. Interacts with COX16. The cofactor is Cu cation.

The protein localises to the mitochondrion inner membrane. The catalysed reaction is 4 Fe(II)-[cytochrome c] + O2 + 8 H(+)(in) = 4 Fe(III)-[cytochrome c] + 2 H2O + 4 H(+)(out). Functionally, component of the cytochrome c oxidase, the last enzyme in the mitochondrial electron transport chain which drives oxidative phosphorylation. The respiratory chain contains 3 multisubunit complexes succinate dehydrogenase (complex II, CII), ubiquinol-cytochrome c oxidoreductase (cytochrome b-c1 complex, complex III, CIII) and cytochrome c oxidase (complex IV, CIV), that cooperate to transfer electrons derived from NADH and succinate to molecular oxygen, creating an electrochemical gradient over the inner membrane that drives transmembrane transport and the ATP synthase. Cytochrome c oxidase is the component of the respiratory chain that catalyzes the reduction of oxygen to water. Electrons originating from reduced cytochrome c in the intermembrane space (IMS) are transferred via the dinuclear copper A center (CU(A)) of subunit 2 and heme A of subunit 1 to the active site in subunit 1, a binuclear center (BNC) formed by heme A3 and copper B (CU(B)). The BNC reduces molecular oxygen to 2 water molecules using 4 electrons from cytochrome c in the IMS and 4 protons from the mitochondrial matrix. The sequence is that of Cytochrome c oxidase subunit 2 (MT-CO2) from Latimeria chalumnae (Coelacanth).